The primary structure comprises 428 residues: Pyruvate dehydrogenase E1 component subunit alpha-3, chloroplastic (428 aa).

The transit peptide at 1–61 directs the protein to the chloroplast; it reads MATAFAPTKL…NATRRSPVVS (61 aa). 8 residues coordinate pyruvate: His115, Tyr141, Arg142, Ala190, Ile192, Asp227, Gly228, and Asn256. 8 residues coordinate thiamine diphosphate: Tyr141, Arg142, Ala190, Ile192, Asp227, Gly228, Asn256, and His325. Asp227 contributes to the Mg(2+) binding site. Asn256 provides a ligand contact to Mg(2+).

As to quaternary structure, tetramer of 2 alpha and 2 beta subunits. Thiamine diphosphate serves as cofactor. It depends on Mg(2+) as a cofactor.

The protein resides in the plastid. It localises to the chloroplast. The catalysed reaction is N(6)-[(R)-lipoyl]-L-lysyl-[protein] + pyruvate + H(+) = N(6)-[(R)-S(8)-acetyldihydrolipoyl]-L-lysyl-[protein] + CO2. Functionally, the pyruvate dehydrogenase complex catalyzes the overall conversion of pyruvate to acetyl-CoA and CO(2). It contains multiple copies of three enzymatic components: pyruvate dehydrogenase (E1), dihydrolipoamide acetyltransferase (E2) and lipoamide dehydrogenase (E3). The polypeptide is Pyruvate dehydrogenase E1 component subunit alpha-3, chloroplastic (PDH-E1 ALPHA) (Arabidopsis thaliana (Mouse-ear cress)).